Here is a 2904-residue protein sequence, read N- to C-terminus: Highly reducing polyketide synthase bet1 (2904 aa).

One can recognise a Ketosynthase family 3 (KS3) domain in the interval 8-441 (NEPIAIVGSG…GTNAHAIVES (434 aa)). Catalysis depends on for beta-ketoacyl synthase activity residues C181, H320, and H361. The interval 553 to 875 (VFTGQGAQYA…PYHGTLLRGG (323 aa)) is acyl transferase (AT) domain. The interval 948-1081 (HQLLGDVSPD…GELKVVLVDE (134 aa)) is N-terminal hotdog fold. The PKS/mFAS DH domain occupies 948 to 1257 (HQLLGDVSPD…FKPVGSDASN (310 aa)). A dehydratase (DH) domain region spans residues 971-1255 (PREMTWLEGH…VKFKPVGSDA (285 aa)). The active-site Proton acceptor; for dehydratase activity is H980. Residues 1098-1257 (MIPVQPSRLY…FKPVGSDASN (160 aa)) are C-terminal hotdog fold. The Proton donor; for dehydratase activity role is filled by D1159. Positions 1411 to 1596 (KQSTLWVASI…GFSGIDTMSP (186 aa)) are methyltransferase (cMeT) domain. The tract at residues 2125-2298 (TYWLVGLSGA…RSSVVNVGAI (174 aa)) is ketoreductase (KR)domain. The 80-residue stretch at 2407–2486 (EVANVIKQAY…SLVELAAESI (80 aa)) folds into the Carrier domain. The residue at position 2445 (S2445) is an O-(pantetheine 4'-phosphoryl)serine. The tract at residues 2492-2543 (PGVPQANANPNGPSSPDSDATESSNQNSDVDVTSTRATSPSTPAATSPDSNV) is disordered. Positions 2497 to 2523 (ANANPNGPSSPDSDATESSNQNSDVDV) are enriched in polar residues. Residues 2524–2541 (TSTRATSPSTPAATSPDS) are compositionally biased toward low complexity. Residues 2585–2817 (LTGCSGLLGH…DLVSVETCCE (233 aa)) form a reductase (R) domain region.

Pantetheine 4'-phosphate serves as cofactor.

It carries out the reaction 7 malonyl-CoA + acetyl-CoA + 10 AH2 + 5 S-adenosyl-L-methionine + 2 H(+) = dehydroprobetaenone I + 10 A + 5 S-adenosyl-L-homocysteine + 7 CO2 + 8 CoA + 6 H2O. It participates in mycotoxin biosynthesis. In terms of biological role, highly reducing polyketide synthase; part of the gene cluster that mediates the biosynthesis of betaenones, phytotoxic polyketides involved in leaf spot disease in sugar beets. The first step of the pathway is the synthesis of dehydroprobetaenone I by the polyketide synthase bet1 and the enoyl reductase bet3 via condensation of one acetyl-CoA starter unit with 7 malonyl-CoA units and 5 methylations. The C-terminal reductase (R) domain of bet1 catalyzes the reductive release of the polyketide chain. Because bet1 lacks a designated enoylreductase (ER) domain, the required activity is provided the enoyl reductase bet3. The short-chain dehydrogenase/reductase bet4 then catalyzes reduction of dehydroprobetaenone I to probetaenone I. The cytochrome P450 monooxygenase bet2 catalyzes successive epoxidation, oxidation (resulting from epoxide opening) and hydroxylation to install a tertiary alcohol in the decaline ring to yield betaenone C from dehydroprobetaenone I and betaenone B from probetaenone I. The FAD-linked oxidoreductase (orf1) is probably responsible for the conversion of betaenone C to betaenone A via an intramolecular aldol reaction between C-1 and C-17 to form the bridged tricyclic system in betaenone A. In Neocamarosporium betae (Beet black rot fungus), this protein is Highly reducing polyketide synthase bet1.